A 1818-amino-acid polypeptide reads, in one-letter code: Cytadherence high molecular weight protein 2 (1818 aa).

4 coiled-coil regions span residues 31-880 (LESA…KQRE), 919-1607 (ELKI…DNKH), 1644-1755 (HLFE…QAVQ), and 1786-1817 (LATQQSISKQQQIAQLNAEINSIKKLIAQKAA).

Post-translationally, phosphorylated mainly on serine residues.

Functionally, component of the cytoskeleton-like structure which stabilizes the shape of the wall-less Mycoplasma. This cytoskeleton-like network of accessory proteins containing HMW proteins 1 to 5 allows the proper anchoring of cytadhesin proteins in the mycoplasmal membrane at the attachment organelle. The sequence is that of Cytadherence high molecular weight protein 2 (hmw2) from Mycoplasma pneumoniae (strain ATCC 29342 / M129 / Subtype 1) (Mycoplasmoides pneumoniae).